The following is a 489-amino-acid chain: Serine/threonine-protein kinase BSK2 (489 aa).

The interval 1–30 (MGCLHSKTANLPSSDDPSAPNKPESVNGDQ) is disordered. The N-myristoyl glycine moiety is linked to residue glycine 2. Residues 7–16 (KTANLPSSDD) show a composition bias toward polar residues. The 267-residue stretch at 56 to 322 (SCIVSEGGEK…QEEVASHVLM (267 aa)) folds into the Protein kinase domain. ATP-binding positions include 62 to 70 (GGEKAPNVV) and lysine 84. The Proton acceptor role is filled by aspartate 178.

The protein belongs to the protein kinase superfamily. Ser/Thr protein kinase family. Phosphorylated by BRI1 upon brassinolide (BL) treatment.

The protein resides in the cell membrane. The catalysed reaction is L-seryl-[protein] + ATP = O-phospho-L-seryl-[protein] + ADP + H(+). It catalyses the reaction L-threonyl-[protein] + ATP = O-phospho-L-threonyl-[protein] + ADP + H(+). Its function is as follows. Probable serine/threonine kinase that acts as a positive regulator of brassinosteroid (BR) signaling downstream of the receptor kinase BRI1. Mediates signal transduction from BRI1 by functioning as substrate of BRI1. This is Serine/threonine-protein kinase BSK2 from Arabidopsis thaliana (Mouse-ear cress).